Reading from the N-terminus, the 35-residue chain is Kappa-stichotoxin-She3a (35 aa).

Residues 3 to 35 (CIDTIPKSRCTAFQCKHSMKYRLSFCRKTCGTC) form the ShKT domain. 3 disulfides stabilise this stretch: Cys3–Cys35, Cys12–Cys28, and Cys17–Cys32.

This sequence belongs to the sea anemone type 1 potassium channel toxin family. Type 1a subfamily.

The protein localises to the secreted. Its subcellular location is the nematocyst. Its function is as follows. Peptide with both antimicrobial and neurotoxin activities. Inhibits voltage-dependent potassium channels. Potently blocks Kv1.1/KCNA1 (IC(50)=6.7-87 pM) and Kv1.3/KCNA3 (IC(50)=10-250 pM). Less potently blocks Kv1.4/KCNA4 (IC(50)=0.31 nM), and Kv1.6/KCNA6 (IC(50)=0.16 nM). Shows moderate activity on Kv1.2/KCNA2 (IC(50)=9 nM), Kv1.7/KCNA7 (IC(50)=11.5 nM), and KCa3.1/KCNN4 (Kd=0.03-30 nM). Blocks Kv channels by binding to a shallow vestibule at the outer entrance to the ion conduction pathway and occluding the entrance to the pore. Shows antibacterial activity against all tested bacteria (the Gram-positive bacteria B.subtilis and S.aureus, and the Gram-negative bacteria S.typhimurium and P.aeruginosa). The protein is Kappa-stichotoxin-She3a of Stichodactyla helianthus (Sun anemone).